We begin with the raw amino-acid sequence, 617 residues long: AUGMIN subunit 3 (617 aa).

Coiled coils occupy residues 107-140 (DATL…SSAL), 314-334 (LHSL…LYQK), and 481-504 (AIIQ…ENSL).

The protein belongs to the HAUS3 family. As to quaternary structure, part of the augmin complex composed of 8 subunits. The complex acts on microtubules and interacts with gamma-tubulin in spindles and the phragmoplast. Interacts with AUG1.

It localises to the cytoplasm. It is found in the cytoskeleton. The protein localises to the spindle. Its subcellular location is the phragmoplast. In terms of biological role, involved in microtubules reorganization during spindle and phragmoplast development. Required for gamma-tubulin localization during mitosis. This Arabidopsis thaliana (Mouse-ear cress) protein is AUGMIN subunit 3.